We begin with the raw amino-acid sequence, 261 residues long: Precorrin-6A reductase (261 aa).

This sequence belongs to the precorrin-6x reductase family.

The catalysed reaction is precorrin-6B + NADP(+) = precorrin-6A + NADPH + 2 H(+). It participates in cofactor biosynthesis; adenosylcobalamin biosynthesis; cob(II)yrinate a,c-diamide from precorrin-2 (aerobic route): step 6/10. Catalyzes the reduction of the macrocycle of precorrin-6X into precorrin-6Y. The polypeptide is Precorrin-6A reductase (cobK) (Sinorhizobium sp).